A 1010-amino-acid chain; its full sequence is Trifunctional purine biosynthetic protein adenosine-3 (1010 aa).

An N-acetylalanine modification is found at Ala2. Phosphoserine is present on Ser10. Residues 111–318 (KEFMDRHGIP…LYEVIQSTLD (208 aa)) form the ATP-grasp domain. Residues 190–193 (EELL), Glu197, Arg220, and Asn229 each bind ATP. Mg(2+)-binding residues include Glu288 and Asn290. An N6-acetyllysine modification is found at Lys350. Residues 434–809 (SLTYKESGVD…HFSFEKKKAR (376 aa)) form an AIRS domain region. Phosphoserine is present on Ser440. Phosphothreonine is present on Thr682. Ser796 and Ser802 each carry phosphoserine. Positions 810–1010 (VAVLISGTGS…NGKICWVKEE (201 aa)) are GART domain. Position 818–820 (818–820 (GSN)) interacts with N(1)-(5-phospho-beta-D-ribosyl)glycinamide. (6R)-10-formyltetrahydrofolate is bound by residues Arg871, 896-899 (MRIL), and Asn913. Residue His915 is the Proton donor of the active site. Residue 947–951 (AEDVD) participates in (6R)-10-formyltetrahydrofolate binding. 977-980 (KLAE) is a binding site for N(1)-(5-phospho-beta-D-ribosyl)glycinamide.

In the N-terminal section; belongs to the GARS family. It in the central section; belongs to the AIR synthase family. This sequence in the C-terminal section; belongs to the GART family. Homodimer. The cofactor is Mg(2+). Mn(2+) is required as a cofactor.

The enzyme catalyses 5-phospho-beta-D-ribosylamine + glycine + ATP = N(1)-(5-phospho-beta-D-ribosyl)glycinamide + ADP + phosphate + H(+). It carries out the reaction N(1)-(5-phospho-beta-D-ribosyl)glycinamide + (6R)-10-formyltetrahydrofolate = N(2)-formyl-N(1)-(5-phospho-beta-D-ribosyl)glycinamide + (6S)-5,6,7,8-tetrahydrofolate + H(+). It catalyses the reaction 2-formamido-N(1)-(5-O-phospho-beta-D-ribosyl)acetamidine + ATP = 5-amino-1-(5-phospho-beta-D-ribosyl)imidazole + ADP + phosphate + H(+). The protein operates within purine metabolism; IMP biosynthesis via de novo pathway; 5-amino-1-(5-phospho-D-ribosyl)imidazole from N(2)-formyl-N(1)-(5-phospho-D-ribosyl)glycinamide: step 2/2. Its pathway is purine metabolism; IMP biosynthesis via de novo pathway; N(1)-(5-phospho-D-ribosyl)glycinamide from 5-phospho-alpha-D-ribose 1-diphosphate: step 2/2. It functions in the pathway purine metabolism; IMP biosynthesis via de novo pathway; N(2)-formyl-N(1)-(5-phospho-D-ribosyl)glycinamide from N(1)-(5-phospho-D-ribosyl)glycinamide (10-formyl THF route): step 1/1. Functionally, trifunctional enzyme that catalyzes three distinct reactions as part of the 'de novo' inosine monophosphate biosynthetic pathway. The chain is Trifunctional purine biosynthetic protein adenosine-3 (GART) from Homo sapiens (Human).